Consider the following 321-residue polypeptide: NADPH-dependent codeinone reductase 1-3 (321 aa).

Positions 27 and 51 each coordinate NADPH. Catalysis depends on proton donor residues Y56 and H119. H119 lines the substrate pocket. The NADPH site is built by Q187, S214, L216, S264, and R269. Residues 300-321 (ADFLLSPTGPFKTEEEFWDEKD) are disordered.

The protein belongs to the aldo/keto reductase family. In terms of tissue distribution, latex secreting cells (laticifer cells). Expressed constitutively in all organs with highest levels in capsules. Restricted to the parietal region of sieve elements adjacent or proximal to laticifers in roots, stems, leaves and carpels.

Its subcellular location is the cytoplasm. The protein localises to the cytosol. The enzyme catalyses codeine + NADP(+) = codeinone + NADPH + H(+). It catalyses the reaction neopine + NADP(+) = neopinone + NADPH + H(+). The catalysed reaction is morphine + NADP(+) = morphinone + NADPH + H(+). It carries out the reaction neomorphine + NADP(+) = neomorphinone + NADPH + H(+). It functions in the pathway alkaloid biosynthesis; morphine biosynthesis. In terms of biological role, NADPH-dependent codeinone reductase involved in biosynthesis of morphinan-type benzylisoquinoline and opiate alkaloids natural products. Reduces codeinone to codeine in the penultimate step in morphine biosynthesis. Can use morphinone, hydrocodone and hydromorphone as substrate during reductive reaction with NADPH as cofactor, and morphine and dihydrocodeine as substrate during oxidative reaction with NADP as cofactor. Converts morphinone to morphine, and neomorphinone to neomorphine. Reduces irreversibly neopinone, a spontaneous isomer of codeinone, to neopine; in planta, neopine levels are limited to low levels. The sequence is that of NADPH-dependent codeinone reductase 1-3 from Papaver somniferum (Opium poppy).